The chain runs to 272 residues: MSTIAESARIHPMAVVEDGATIGEGVKIGPFCHVGPHVVLHANVELLSHAIVTGRTVIGKGTRIFPMAVVGGDPQSVHHGGEETTLTVGANCTIREGVTMNTGTADFGGQTIVGDNNLFLANSHVAHDCRVGNHVIMSNNVMLAGHVVIEDRVILGGGSAVHQFTRVGRQAFVGGLSAVSYDVIPYGMLNGNPGLLSGLNVVGMTRAGVDRAVIHRVRRAYKSIFEGPGSVRENAAAIREEYADCEQAVHILDFIAADSDRALSSPTRGQKG.

The protein belongs to the transferase hexapeptide repeat family. LpxA subfamily. Homotrimer.

It is found in the cytoplasm. The enzyme catalyses a (3R)-hydroxyacyl-[ACP] + UDP-N-acetyl-alpha-D-glucosamine = a UDP-3-O-[(3R)-3-hydroxyacyl]-N-acetyl-alpha-D-glucosamine + holo-[ACP]. It participates in glycolipid biosynthesis; lipid IV(A) biosynthesis; lipid IV(A) from (3R)-3-hydroxytetradecanoyl-[acyl-carrier-protein] and UDP-N-acetyl-alpha-D-glucosamine: step 1/6. Involved in the biosynthesis of lipid A, a phosphorylated glycolipid that anchors the lipopolysaccharide to the outer membrane of the cell. The chain is Acyl-[acyl-carrier-protein]--UDP-N-acetylglucosamine O-acyltransferase from Rhizobium johnstonii (strain DSM 114642 / LMG 32736 / 3841) (Rhizobium leguminosarum bv. viciae).